We begin with the raw amino-acid sequence, 571 residues long: FAD-linked oxidoreductase patO (571 aa).

The signal sequence occupies residues 1 to 23 (MRLHQSPPRLLVCILSVLQVSAG). N-linked (GlcNAc...) asparagine glycans are attached at residues N47, N101, N125, N179, N341, N374, N380, N421, N445, and N480. One can recognise an FAD-binding PCMH-type domain in the interval 115 to 294 (TLGAMVRYAV…YAVTVKTFPD (180 aa)).

It belongs to the oxygen-dependent FAD-linked oxidoreductase family. Requires FAD as cofactor.

The protein localises to the vacuole lumen. It participates in mycotoxin biosynthesis; patulin biosynthesis. Functionally, FAD-linked oxidoreductase; part of the gene cluster that mediates the biosynthesis of patulin, an acetate-derived tetraketide mycotoxin produced by several fungal species that shows antimicrobial properties against several bacteria. PatO acts with patJ in the vacuole to convert gentisyl alcohol to isoepoxydon. The pathway begins with the synthesis of 6-methylsalicylic acid by the polyketide synthase (PKS) patK via condensation of acetate and malonate units. The 6-methylsalicylic acid decarboxylase patG then catalyzes the decarboxylation of 6-methylsalicylic acid to yield m-cresol (also known as 3-methylphenol). These first reactions occur in the cytosol. The intermediate m-cresol is then transported into the endoplasmic reticulum where the cytochrome P450 monooxygenase patH converts it to m-hydroxybenzyl alcohol, which is further converted to gentisyl alcohol by the cytochrome P450 monooxygenase patI. The oxidoreductases patJ and patO further convert gentisyl alcohol to isoepoxydon in the vacuole. PatN catalyzes then the transformation of isoepoxydon into phyllostine. The cluster protein patF is responsible for the conversion from phyllostine to neopatulin whereas the alcohol dehydrogenase patD converts neopatulin to E-ascladiol. The steps between isoepoxydon and E-ascladiol occur in the cytosol, and E-ascladiol is probably secreted to the extracellular space by one of the cluster-specific transporters patC or patM. Finally, the secreted patulin synthase patE catalyzes the conversion of E-ascladiol to patulin. In Penicillium expansum (Blue mold rot fungus), this protein is FAD-linked oxidoreductase patO.